Here is a 109-residue protein sequence, read N- to C-terminus: Cytochrome c (109 aa).

C25, C28, H29, and M88 together coordinate heme c.

Belongs to the cytochrome c family. In terms of processing, binds 1 heme c group covalently per subunit.

It localises to the mitochondrion intermembrane space. Electron carrier protein. The oxidized form of the cytochrome c heme group can accept an electron from the heme group of the cytochrome c1 subunit of cytochrome reductase. Cytochrome c then transfers this electron to the cytochrome oxidase complex, the final protein carrier in the mitochondrial electron-transport chain. The sequence is that of Cytochrome c from Tetrahymena pyriformis.